The chain runs to 284 residues: Tropomyosin (284 aa).

The interval 1-47 (MDAIKKKMQAMKIEKDNAMDRADAAEEKARQQQERVEKLEEELRDTQ) is disordered. Residues 1–284 (MDAIKKKMQA…DQTFQELSGY (284 aa)) adopt a coiled-coil conformation. The span at 12 to 38 (KIEKDNAMDRADAAEEKARQQQERVEK) shows a compositional bias: basic and acidic residues.

The protein belongs to the tropomyosin family. In terms of assembly, homodimer.

In terms of biological role, tropomyosin, in association with the troponin complex, plays a central role in the calcium dependent regulation of muscle contraction. This chain is Tropomyosin, found in Trichinella pseudospiralis (Parasitic roundworm).